The primary structure comprises 269 residues: Cytochrome c oxidase subunit 3 (269 aa).

Residues 1-22 (MTNLIRSNFQDHPFHLVSPSPW) lie on the Mitochondrial matrix side of the membrane. Residues 23–41 (PLNTSVCLLNLTTTGALSM) form a helical membrane-spanning segment. Residues 42–48 (HNFNNIH) lie on the Mitochondrial intermembrane side of the membrane. The helical transmembrane segment at 49 to 73 (YLYYIALIGLVSAMFLWFRDIISEG) threads the bilayer. At 74–80 (TFLGDHT) the chain is on the mitochondrial matrix side. The helical transmembrane segment at 81 to 114 (LAVQRGLNLGIILFIVSEALFFLAIFWAFFHSAL) threads the bilayer. Residues 115–137 (TPTVELGAQWPPIGIEPVNPFEL) are Mitochondrial intermembrane-facing. The helical transmembrane segment at 138–161 (PLLNTVILLSSGATITYAHHALIK) threads the bilayer. Over 162–164 (GER) the chain is Mitochondrial matrix. A helical transmembrane segment spans residues 165–188 (EGALYGSIATILLAIIFTGFQGVE). Residues 189–201 (YSVSSFTISDGAF) are Mitochondrial intermembrane-facing. The helical transmembrane segment at 202–230 (GTCFFFSTGFHGIHVIIGTIFLAVALWRI) threads the bilayer. At 231–248 (FAYHLTDNHHVGFEGGIL) the chain is on the mitochondrial matrix side. Residues 249–265 (YWHFVDVVWLFLYISVY) traverse the membrane as a helical segment. The Mitochondrial intermembrane segment spans residues 266-269 (YWGS).

The protein belongs to the cytochrome c oxidase subunit 3 family. In terms of assembly, component of the cytochrome c oxidase (complex IV, CIV), a multisubunit enzyme composed of 11 subunits. The complex is composed of a catalytic core of 3 subunits Cox1, Cox2 and Cox3, encoded in the mitochondrial DNA, and 8 supernumerary subunits Cox4, Cox5a/Cox5, Cox6, Cox7, Cox8, Cox7a/Cox9, Cox6b/Cox12 and Cox6a/Cox13, which are encoded in the nuclear genome. The complex exists as a monomer or a dimer and forms respiratory supercomplexes (SCs) in the inner mitochondrial membrane with NADH-ubiquinone oxidoreductase (complex I, CI) and ubiquinol-cytochrome c oxidoreductase (cytochrome b-c1 complex, complex III, CIII), resulting in various different assemblies (supercomplexes I(1)IV(1), I(1)III(3)IV(2), III(2)IV(1) and III(2)IV(2) as well as larger supercomplexes of compositions like I(1)III(2)IV(5-6)).

The protein resides in the mitochondrion inner membrane. The catalysed reaction is 4 Fe(II)-[cytochrome c] + O2 + 8 H(+)(in) = 4 Fe(III)-[cytochrome c] + 2 H2O + 4 H(+)(out). Functionally, component of the cytochrome c oxidase, the last enzyme in the mitochondrial electron transport chain which drives oxidative phosphorylation. The respiratory chain contains 3 multisubunit complexes succinate dehydrogenase (complex II, CII), ubiquinol-cytochrome c oxidoreductase (cytochrome b-c1 complex, complex III, CIII) and cytochrome c oxidase (complex IV, CIV), that cooperate to transfer electrons derived from NADH and succinate to molecular oxygen, creating an electrochemical gradient over the inner membrane that drives transmembrane transport and the ATP synthase. Cytochrome c oxidase is the component of the respiratory chain that catalyzes the reduction of oxygen to water. Electrons originating from reduced cytochrome c in the intermembrane space (IMS) are transferred via the dinuclear copper A center (CU(A)) of Cox2 and heme A of Cox1 to the active site in Cox1, a binuclear center (BNC) formed by heme A3 and copper B (CU(B)). The BNC reduces molecular oxygen to 2 water molecules using 4 electrons from cytochrome c in the IMS and 4 protons from the mitochondrial matrix. The polypeptide is Cytochrome c oxidase subunit 3 (cox-3) (Neurospora crassa (strain ATCC 24698 / 74-OR23-1A / CBS 708.71 / DSM 1257 / FGSC 987)).